The primary structure comprises 289 residues: (3R)-3-[(carboxymethyl)amino]fatty acid oxygenase/decarboxylase (289 aa).

Tyr-65, Tyr-70, and Gly-93 together coordinate a (3R)-3-[(carboxymethyl)amino]fatty acid. The Fe(2+) site is built by His-97 and Asp-99. A (3R)-3-[(carboxymethyl)amino]fatty acid contacts are provided by Tyr-100 and Lys-158. His-260 is a binding site for Fe(2+). Position 264 (His-264) interacts with 2-oxoglutarate. An a (3R)-3-[(carboxymethyl)amino]fatty acid-binding site is contributed by Arg-275.

It belongs to the TfdA dioxygenase family. Fe(2+) is required as a cofactor.

The catalysed reaction is a (3R)-3-[(carboxymethyl)amino]fatty acid + 2 2-oxoglutarate + 2 O2 = a (3R)-3-isocyanyl-fatty acid + 2 succinate + 3 CO2 + 2 H2O. The enzyme catalyses a (3R)-3-[(carboxymethyl)amino]fatty acid + 2-oxoglutarate + O2 = a (3R)-3-{[carboxy(hydroxy)methyl]amino}fatty acid + succinate + CO2. It carries out the reaction a (3R)-3-{[carboxy(hydroxy)methyl]amino}fatty acid + 2-oxoglutarate + O2 = a (3R)-3-isocyanyl-fatty acid + succinate + 2 CO2 + 2 H2O. In terms of biological role, involved in the biosynthesis of a unique class of isonitrile lipopeptides (INLPs) that seem to play a role in metal acquisition in M.marinum. Catalyzes the conversion of (3R)-3-[(carboxymethyl)amino]fatty acids to (3R)-3-isocyanyl-fatty acids through an oxidative decarboxylation mechanism, thereby generating the isonitrile group of INLPs. The sequence is that of (3R)-3-[(carboxymethyl)amino]fatty acid oxygenase/decarboxylase from Mycobacterium marinum (strain ATCC BAA-535 / M).